The following is a 201-amino-acid chain: ATP-dependent Clp protease proteolytic subunit (201 aa).

The active-site Nucleophile is Ser105. Residue His130 is part of the active site.

It belongs to the peptidase S14 family. As to quaternary structure, fourteen ClpP subunits assemble into 2 heptameric rings which stack back to back to give a disk-like structure with a central cavity, resembling the structure of eukaryotic proteasomes.

It localises to the cytoplasm. It catalyses the reaction Hydrolysis of proteins to small peptides in the presence of ATP and magnesium. alpha-casein is the usual test substrate. In the absence of ATP, only oligopeptides shorter than five residues are hydrolyzed (such as succinyl-Leu-Tyr-|-NHMec, and Leu-Tyr-Leu-|-Tyr-Trp, in which cleavage of the -Tyr-|-Leu- and -Tyr-|-Trp bonds also occurs).. Cleaves peptides in various proteins in a process that requires ATP hydrolysis. Has a chymotrypsin-like activity. Plays a major role in the degradation of misfolded proteins. The sequence is that of ATP-dependent Clp protease proteolytic subunit from Acinetobacter baylyi (strain ATCC 33305 / BD413 / ADP1).